A 436-amino-acid chain; its full sequence is Xylose isomerase (436 aa).

Active-site residues include histidine 100 and aspartate 103. 7 residues coordinate Mg(2+): glutamate 231, glutamate 267, histidine 270, aspartate 295, aspartate 306, aspartate 308, and aspartate 338.

The protein belongs to the xylose isomerase family. In terms of assembly, homotetramer. The cofactor is Mg(2+).

It is found in the cytoplasm. It carries out the reaction alpha-D-xylose = alpha-D-xylulofuranose. This is Xylose isomerase from Rhizobium johnstonii (strain DSM 114642 / LMG 32736 / 3841) (Rhizobium leguminosarum bv. viciae).